The primary structure comprises 64 residues: UPF0337 protein SAB0772 (64 aa).

Positions 1 to 40 are disordered; the sequence is MADESKFEQAKGNVKETIGNVTDNKNLENEGKEDKASGKA. Basic and acidic residues predominate over residues 25-40; the sequence is KNLENEGKEDKASGKA.

The protein belongs to the UPF0337 (CsbD) family.

In Staphylococcus aureus (strain bovine RF122 / ET3-1), this protein is UPF0337 protein SAB0772.